The primary structure comprises 568 residues: Urease subunit alpha (568 aa).

A Urease domain is found at 130–568; the sequence is GGIDTHIHFI…LPMAQRYFLF (439 aa). The Ni(2+) site is built by H135, H137, and K218. K218 bears the N6-carboxylysine mark. A substrate-binding site is contributed by H220. The Ni(2+) site is built by H247 and H273. The active-site Proton donor is the H321. D361 is a Ni(2+) binding site.

The protein belongs to the metallo-dependent hydrolases superfamily. Urease alpha subunit family. As to quaternary structure, heterotrimer of UreA (gamma), UreB (beta) and UreC (alpha) subunits. Three heterotrimers associate to form the active enzyme. The cofactor is Ni cation. Post-translationally, carboxylation allows a single lysine to coordinate two nickel ions.

The protein localises to the cytoplasm. It catalyses the reaction urea + 2 H2O + H(+) = hydrogencarbonate + 2 NH4(+). It functions in the pathway nitrogen metabolism; urea degradation; CO(2) and NH(3) from urea (urease route): step 1/1. The protein is Urease subunit alpha of Burkholderia mallei (strain NCTC 10247).